The chain runs to 286 residues: Bifunctional protein FolD (286 aa).

Residues 165–167 (GRS), Ser-190, and Val-231 each bind NADP(+).

The protein belongs to the tetrahydrofolate dehydrogenase/cyclohydrolase family. In terms of assembly, homodimer.

It carries out the reaction (6R)-5,10-methylene-5,6,7,8-tetrahydrofolate + NADP(+) = (6R)-5,10-methenyltetrahydrofolate + NADPH. The catalysed reaction is (6R)-5,10-methenyltetrahydrofolate + H2O = (6R)-10-formyltetrahydrofolate + H(+). It participates in one-carbon metabolism; tetrahydrofolate interconversion. Catalyzes the oxidation of 5,10-methylenetetrahydrofolate to 5,10-methenyltetrahydrofolate and then the hydrolysis of 5,10-methenyltetrahydrofolate to 10-formyltetrahydrofolate. This Bacillus thuringiensis (strain Al Hakam) protein is Bifunctional protein FolD.